Consider the following 145-residue polypeptide: Large-conductance mechanosensitive channel (145 aa).

3 consecutive transmembrane segments (helical) span residues 14 to 34, 38 to 58, and 81 to 101; these read VMDLAVGVIIGGAFGGIVKSL, LIMPIVGAIFGGFDFSNYFLP, and GSFLTVLINFLILAWIIFLMV.

The protein belongs to the MscL family. In terms of assembly, homopentamer.

The protein resides in the cell inner membrane. Channel that opens in response to stretch forces in the membrane lipid bilayer. May participate in the regulation of osmotic pressure changes within the cell. This is Large-conductance mechanosensitive channel from Rhizobium johnstonii (strain DSM 114642 / LMG 32736 / 3841) (Rhizobium leguminosarum bv. viciae).